The following is a 450-amino-acid chain: V-type proton ATPase subunit H (450 aa).

The protein belongs to the V-ATPase H subunit family. V-ATPase is a heteromultimeric enzyme composed of a peripheral catalytic V1 complex (components A to H) attached to an integral membrane V0 proton pore complex (components: a, c, c', c'', d, e, f and VOA1).

It is found in the vacuole membrane. Its function is as follows. Subunit of the V1 complex of vacuolar(H+)-ATPase (V-ATPase), a multisubunit enzyme composed of a peripheral complex (V1) that hydrolyzes ATP and a membrane integral complex (V0) that translocates protons. V-ATPase is responsible for acidifying and maintaining the pH of intracellular compartments. This subunit is essential for activity, but not assembly, of the enzyme complex. This subunit is also required for silencing the ATPase activity of V-ATPase when V1 is detached from V0. The sequence is that of V-type proton ATPase subunit H (vma13) from Schizosaccharomyces pombe (strain 972 / ATCC 24843) (Fission yeast).